The following is a 334-amino-acid chain: MSLDIDQIALHQLIKRDEQTLDVVLRDSLLPTNAVVEEMMAELHRVYSAKSKAYGLFNEQSELADALKRSRKGDEDFLSFSRAATGRLRDELAKYPFAEGGVVLFCQYRYLAVEYLLISVLSSCHSMRVNEQLDLSTTHYLDINRADIVARIDLTEWETNPESTRYLTFLKGRVGRKVSDFFMDFLSAAEGLDTKAQNRGLLQAVDDYCADAELGKNERQAYRQQVYSYCNEQLRAGEEIALQVLAQELPKLGEKDFQQFSAEQGYALEESFPADRGTLRQLTKFAGSGGGLSINFDALLLDERIFWDAATDTLTIKGTPPNLRDQLQRRAGSK.

Belongs to the YejK family.

It localises to the cytoplasm. Its subcellular location is the nucleoid. This chain is Nucleoid-associated protein YPTS_1390, found in Yersinia pseudotuberculosis serotype IB (strain PB1/+).